The primary structure comprises 86 residues: Large ribosomal subunit protein bL31B (86 aa).

The protein belongs to the bacterial ribosomal protein bL31 family. Type B subfamily. As to quaternary structure, part of the 50S ribosomal subunit.

This is Large ribosomal subunit protein bL31B from Streptococcus uberis (strain ATCC BAA-854 / 0140J).